A 1580-amino-acid polypeptide reads, in one-letter code: MEAQSHSSTTTEKKKVENSIVKCSTRTDVSEKAVASSTTSNEDESPGQTYHRERRNAITMQPQNVQGLSKVSEEPSTSSDERASLIKKEIHGSLPHVAEPSVPYRGTVFAMDPRNGYMEPHYHPPHLFPAFHPPVPIDARHHEGRYHYDPSPIPPLHMTSALSSSPTYPDLPFIRISPHRNPTAASESPFSPPHPYINPYMDYIRSLHSSPSLSMISATRGLSPTDAPHAGVSPAEYYHQMALLTGQRSPYADIIPSAATAGTGAIHMEYLHAMDSTRFSSPRLSARPSRKRTLSISPLSDHSFDLQTMIRTSPNSLVTILNNSRSSSSASGSYGHLSASAISPALSFTYSSAPVSLHMHQQILSRQQSLGSAFGHSPPLIHPAPTFPTQRPIPGIPTVLNPVQVSSGPSESSQNKPTSESAVSSTGDPMHNKRSKIKPDEDLPSPGARGQQEQPEGTTLVKEEGDKDESKQEPEVIYETNCHWEGCAREFDTQEQLVHHINNDHIHGEKKEFVCRWLDCSREQKPFKAQYMLVVHMRRHTGEKPHKCTFEGCTKAYSRLENLKTHLRSHTGEKPYVCEHEGCNKAFSNASDRAKHQNRTHSNEKPYVCKIPGCTKRYTDPSSLRKHVKTVHGPEAHVTKKQRGDIHPRPPPPRDSGSHSQSRSPGRPTQGALGEQQDLSNTTSKREECLQVKTVKAEKPMTSQPSPGGQSSCSSQQSPISNYSNSGLELPLTDGGSIGDLSAIDETPIMDSTISTATTALALQARRNPAGTKWMEHVKLERLKQVNGMFPRLNPILPPKAPAVSPLIGNGTQSNNTCSLGGPMTLLPGRSDLSGVDVTMLNMLNRRDSSASTISSAYLSSRRSSGISPCFSSRRSSEASQAEGRPQNVSVADSYDPISTDASRRSSEASQSDGLPSLLSLTPAQQYRLKAKYAAATGGPPPTPLPNMERMSLKTRLALLGDALEPGVALPPVHAPRRCSDGGAHGYGRRHLQPHDAPGHGVRRASDPVRTGSEGLALPRVPRFSSLSSCNPPAMATSAEKRSLVLQNYTRPEGGQSRNFHSSPCPPSITENVTLESLTMDADANLNDEDFLPDDVVQYLNSQNQAGYEQHFPSALPDDSKVPHGPGDFDAPGLPDSHAGQQFHALEQPCPEGSKTDLPIQWNEVSSGSADLSSSKLKCGPRPAVPQTRAFGFCNGMVVHPQNPLRSGPAGGYQTLGENSNPYGGPEHLMLHNSPGSGTSGNAFHEQPCKAPQYGNCLNRQPVAPGALDGACGAGIQASKLKSTPMQGSGGQLNFGLPVAPNESAGSMVNGMQNQDPVGQGYLAHQLLGDSMQHPGAGRPGQQMLGQISATSHINIYQGPESCLPGAHGMGSQPSSLAVVRGYQPCASFGGSRRQAMPRDSLALQSGQLSDTSQTCRVNGIKMEMKGQPHPLCSNLQNYSGQFYDQTVGFSQQDTKAGSFSISDASCLLQGTSAKNSELLSPGANQVTSTVDSLDSHDLEGVQIDFDAIIDDGDHSSLMSGALSPSIIQNLSHSSSRLTTPRASLPFPALSMSTTNMAIGDMSSLLTSLAEESKFLAVMQ.

The residue at position 1 (methionine 1) is an N-acetylmethionine. Composition is skewed to polar residues over residues 1–10 (MEAQSHSSTT) and 58–78 (ITMQPQNVQGLSKVSEEPSTS). Positions 1 to 79 (MEAQSHSSTT…KVSEEPSTSS (79 aa)) are disordered. Arginine 175 carries the omega-N-methylarginine modification. The disordered stretch occupies residues 368 to 475 (QSLGSAFGHS…DKDESKQEPE (108 aa)). Residues 401-427 (NPVQVSSGPSESSQNKPTSESAVSSTG) show a composition bias toward polar residues. Residues lysine 438 and lysine 462 each participate in a glycyl lysine isopeptide (Lys-Gly) (interchain with G-Cter in SUMO2) cross-link. Positions 461–474 (VKEEGDKDESKQEP) are enriched in basic and acidic residues. 5 consecutive C2H2-type zinc fingers follow at residues 480–505 (TNCHWEGCAREFDTQEQLVHHINNDH), 513–540 (FVCRWLDCSREQKPFKAQYMLVVHMRRH), 546–570 (HKCTFEGCTKAYSRLENLKTHLRSH), 576–601 (YVCEHEGCNKAFSNASDRAKHQNRTH), and 607–632 (YVCKIPGCTKRYTDPSSLRKHVKTVH). The segment at 620–728 (DPSSLRKHVK…PISNYSNSGL (109 aa)) is disordered. A compositionally biased stretch (basic and acidic residues) spans 632–648 (HGPEAHVTKKQRGDIHP). A Phosphoserine modification is found at serine 664. Residues 684 to 699 (SKREECLQVKTVKAEK) are compositionally biased toward basic and acidic residues. The span at 703-726 (SQPSPGGQSSCSSQQSPISNYSNS) shows a compositional bias: low complexity. Positions 745–845 (DETPIMDSTI…VDVTMLNMLN (101 aa)) are mediates interaction with DZIP1. Lysine 773 is covalently cross-linked (Glycyl lysine isopeptide (Lys-Gly) (interchain with G-Cter in ubiquitin)). Lysine 779 participates in a covalent cross-link: Glycyl lysine isopeptide (Lys-Gly) (interchain with G-Cter in SUMO2); alternate. Lysine 779 is covalently cross-linked (Glycyl lysine isopeptide (Lys-Gly) (interchain with G-Cter in ubiquitin); alternate). Glycyl lysine isopeptide (Lys-Gly) (interchain with G-Cter in ubiquitin) cross-links involve residues lysine 784 and lysine 800. Serine 849, serine 865, serine 877, and serine 907 each carry phosphoserine; by PKA. Residues 863 to 882 (RSSGISPCFSSRRSSEASQA) show a composition bias toward low complexity. Residues 863 to 918 (RSSGISPCFSSRRSSEASQAEGRPQNVSVADSYDPISTDASRRSSEASQSDGLPSL) form a disordered region. Over residues 908 to 918 (EASQSDGLPSL) the composition is skewed to polar residues. Residues serine 980 and serine 1006 each carry the phosphoserine; by PKA modification. The segment at 981 to 1042 (DGGAHGYGRR…PAMATSAEKR (62 aa)) is disordered.

It belongs to the GLI C2H2-type zinc-finger protein family. In terms of assembly, the full-length GLI3 form (GLI3FL) interacts with SUFU and this interaction regulates the formation of either repressor or activator forms of GLI3. Its association with SUFU is regulated by Hh signaling and dissociation of the SUFU-GLI3 interaction requires the presence of the ciliary motor KIF3A. Interacts with KIF7. The activator form of GLI3 (GLI3A) but not the repressor form (GLI3R) can interact with TRPS1. The phosphorylated form interacts with BTRC. Interacts with ZIC1. Interacts with ZIC3 (via C2H2-type domains 3, 4 and 5); the interaction enhances its transcriptional activity. Interacts with WRD11; the interaction associates EMX1 with GLI3. Interacts with DZIP1; retains GLI3 within the cytoplasm. In terms of processing, phosphorylated on multiple sites by protein kinase A (PKA) and phosphorylation by PKA primes further phosphorylation by CK1 and GSK3. Phosphorylated by DYRK2 (in vitro). Phosphorylation is essential for its proteolytic processing. Transcriptional repressor GLI3R, a C-terminally truncated form, is generated from the full-length GLI3 protein (GLI3FL/GLI3-190) through proteolytic processing. This process requires PKA-primed phosphorylation of GLI3, ubiquitination of GLI3 and the presence of BTRC. GLI3FL is complexed with SUFU in the cytoplasm and is maintained in a neutral state. Without the Hh signal, the SUFU-GLI3 complex is recruited to cilia, leading to the efficient processing of GLI3FL into GLI3R. GLI3R formation leads to its dissociation from SUFU, allowing it to translocate into the nucleus, and repress Hh target genes. When Hh signaling is initiated, SUFU dissociates from GLI3FL and this has two consequences. First, GLI3R production is halted. Second, free GLI3FL translocates to the nucleus, where it is phosphorylated, destabilized, and converted to a transcriptional activator (GLI3A). Phosphorylated in vitro by ULK3. In terms of tissue distribution, is expressed in a wide variety of normal adult tissues, including lung, colon, spleen, placenta, testis, and myometrium.

It is found in the nucleus. Its subcellular location is the cytoplasm. The protein resides in the cell projection. It localises to the cilium. Has a dual function as a transcriptional activator and a repressor of the sonic hedgehog (Shh) pathway, and plays a role in limb development. The full-length GLI3 form (GLI3FL) after phosphorylation and nuclear translocation, acts as an activator (GLI3A) while GLI3R, its C-terminally truncated form, acts as a repressor. A proper balance between the GLI3 activator and the repressor GLI3R, rather than the repressor gradient itself or the activator/repressor ratio gradient, specifies limb digit number and identity. In concert with TRPS1, plays a role in regulating the size of the zone of distal chondrocytes, in restricting the zone of PTHLH expression in distal cells and in activating chondrocyte proliferation. Binds to the minimal GLI-consensus sequence 5'-GGGTGGTC-3'. This Homo sapiens (Human) protein is Transcriptional activator GLI3 (GLI3).